We begin with the raw amino-acid sequence, 128 residues long: Small ribosomal subunit protein uS9 (128 aa).

Basic and acidic residues predominate over residues 97-113 (RSEGFMTRDPRSVERKK). The segment at 97-128 (RSEGFMTRDPRSVERKKPGQPKARRRFQFSKR) is disordered. The span at 114–128 (PGQPKARRRFQFSKR) shows a compositional bias: basic residues.

The protein belongs to the universal ribosomal protein uS9 family.

In Bacteroides fragilis (strain ATCC 25285 / DSM 2151 / CCUG 4856 / JCM 11019 / LMG 10263 / NCTC 9343 / Onslow / VPI 2553 / EN-2), this protein is Small ribosomal subunit protein uS9.